The primary structure comprises 389 residues: Phospho-N-acetylmuramoyl-pentapeptide-transferase (389 aa).

10 consecutive transmembrane segments (helical) span residues 25–45 (RAVM…PFVI), 74–94 (MGGV…ADWG), 97–117 (FIWI…VDDY), 134–154 (FFWQ…SVSE), 190–210 (ISYP…IVGS), 222–242 (GLVI…AYVM), 259–279 (AGEL…FLWF), 286–306 (VFMG…IAVI), 311–331 (IVLF…MLQV), and 366–386 (QVVV…LSTL).

This sequence belongs to the glycosyltransferase 4 family. MraY subfamily. Mg(2+) serves as cofactor.

It is found in the cell inner membrane. It carries out the reaction UDP-N-acetyl-alpha-D-muramoyl-L-alanyl-gamma-D-glutamyl-meso-2,6-diaminopimeloyl-D-alanyl-D-alanine + di-trans,octa-cis-undecaprenyl phosphate = di-trans,octa-cis-undecaprenyl diphospho-N-acetyl-alpha-D-muramoyl-L-alanyl-D-glutamyl-meso-2,6-diaminopimeloyl-D-alanyl-D-alanine + UMP. It functions in the pathway cell wall biogenesis; peptidoglycan biosynthesis. Functionally, catalyzes the initial step of the lipid cycle reactions in the biosynthesis of the cell wall peptidoglycan: transfers peptidoglycan precursor phospho-MurNAc-pentapeptide from UDP-MurNAc-pentapeptide onto the lipid carrier undecaprenyl phosphate, yielding undecaprenyl-pyrophosphoryl-MurNAc-pentapeptide, known as lipid I. The chain is Phospho-N-acetylmuramoyl-pentapeptide-transferase from Ralstonia pickettii (strain 12J).